The following is a 273-amino-acid chain: NH(3)-dependent NAD(+) synthetase (273 aa).

47-54 (GISGGQDS) is an ATP binding site. Asp53 provides a ligand contact to Mg(2+). Residue Arg139 participates in deamido-NAD(+) binding. Thr159 provides a ligand contact to ATP. Glu164 is a binding site for Mg(2+). Deamido-NAD(+)-binding residues include Lys172 and Asp179. 2 residues coordinate ATP: Lys188 and Thr210. 259–260 (HK) contributes to the deamido-NAD(+) binding site.

This sequence belongs to the NAD synthetase family. Homodimer.

The enzyme catalyses deamido-NAD(+) + NH4(+) + ATP = AMP + diphosphate + NAD(+) + H(+). Its pathway is cofactor biosynthesis; NAD(+) biosynthesis; NAD(+) from deamido-NAD(+) (ammonia route): step 1/1. Catalyzes the ATP-dependent amidation of deamido-NAD to form NAD. Uses ammonia as a nitrogen source. This Staphylococcus saprophyticus subsp. saprophyticus (strain ATCC 15305 / DSM 20229 / NCIMB 8711 / NCTC 7292 / S-41) protein is NH(3)-dependent NAD(+) synthetase.